A 96-amino-acid polypeptide reads, in one-letter code: Putative pterin-4-alpha-carbinolamine dehydratase (96 aa).

The protein belongs to the pterin-4-alpha-carbinolamine dehydratase family.

The enzyme catalyses (4aS,6R)-4a-hydroxy-L-erythro-5,6,7,8-tetrahydrobiopterin = (6R)-L-erythro-6,7-dihydrobiopterin + H2O. This Prochlorococcus marinus (strain MIT 9301) protein is Putative pterin-4-alpha-carbinolamine dehydratase.